The primary structure comprises 413 residues: tRNA (guanine-N(7)-)-methyltransferase non-catalytic subunit WDR4 (413 aa).

Alanine 2 carries the post-translational modification N-acetylalanine. 5 WD repeats span residues 61-100, 102-141, 145-185, 188-228, and 289-329; these read TGSDSILASTFSKSGRYFALTDDSKRLILFRTKPWQCLSV, MVVRRCTALTFTASEDRVLVADKSGDVYSFSVLEPDGCGR, GHLS…IESF, GHTE…QLQC, and TFPH…WQAA. The disordered stretch occupies residues 380 to 413; that stretch reads RLQQQLKKKRQRSPFPGSPEQTKKACPGQSALSC. Serine 392 and serine 412 each carry phosphoserine.

Belongs to the WD repeat TRM82 family. Non-catalytic component of the METTL1-WDR4 complex, composed of METTL1 and WDR4. Interacts with FEN1; the interaction is direct.

The protein localises to the nucleus. The protein resides in the chromosome. Its pathway is tRNA modification; N(7)-methylguanine-tRNA biosynthesis. Its function is as follows. Non-catalytic component of the METTL1-WDR4 methyltransferase complex required for the formation of N(7)-methylguanine in a subset of RNA species, such as tRNAs, mRNAs and microRNAs (miRNAs). In the METTL1-WDR4 methyltransferase complex, WDR4 acts as a scaffold for tRNA-binding. Required for the formation of N(7)-methylguanine at position 46 (m7G46) in a large subset of tRNAs that contain the 5'-RAGGU-3' motif within the variable loop. M7G46 interacts with C13-G22 in the D-loop to stabilize tRNA tertiary structure and protect tRNAs from decay. Also required for the formation of N(7)-methylguanine at internal sites in a subset of mRNAs. Also required for methylation of a specific subset of miRNAs, such as let-7. Acts as a regulator of embryonic stem cell self-renewal and differentiation. Independently of METTL1, also plays a role in genome stability: localizes at the DNA replication site and regulates endonucleolytic activities of FEN1. The protein is tRNA (guanine-N(7)-)-methyltransferase non-catalytic subunit WDR4 of Mus musculus (Mouse).